We begin with the raw amino-acid sequence, 211 residues long: Uracil phosphoribosyltransferase (211 aa).

Residues Arg77, Arg102, and 129–137 each bind 5-phospho-alpha-D-ribose 1-diphosphate; that span reads DPMLATGGS. Residues Ile192 and 197-199 contribute to the uracil site; that span reads GDA. Position 198 (Asp198) interacts with 5-phospho-alpha-D-ribose 1-diphosphate.

The protein belongs to the UPRTase family. Mg(2+) is required as a cofactor.

It catalyses the reaction UMP + diphosphate = 5-phospho-alpha-D-ribose 1-diphosphate + uracil. Its pathway is pyrimidine metabolism; UMP biosynthesis via salvage pathway; UMP from uracil: step 1/1. Its activity is regulated as follows. Allosterically activated by GTP. Catalyzes the conversion of uracil and 5-phospho-alpha-D-ribose 1-diphosphate (PRPP) to UMP and diphosphate. The sequence is that of Uracil phosphoribosyltransferase from Corynebacterium aurimucosum (strain ATCC 700975 / DSM 44827 / CIP 107346 / CN-1) (Corynebacterium nigricans).